The sequence spans 76 residues: ATP synthase subunit 9, mitochondrial (76 aa).

2 helical membrane-spanning segments follow: residues 10 to 30 and 52 to 72; these read IGAGISTIGLLGAGIGIAIVF and ILGFALSEATGLFCLMISFLL.

Belongs to the ATPase C chain family. F-type ATPases have 2 components, CF(1) - the catalytic core - and CF(0) - the membrane proton channel. CF(1) has five subunits: alpha(3), beta(3), gamma(1), delta(1), epsilon(1). CF(0) has three main subunits: a, b and c.

The protein resides in the mitochondrion membrane. Its function is as follows. Mitochondrial membrane ATP synthase (F(1)F(0) ATP synthase or Complex V) produces ATP from ADP in the presence of a proton gradient across the membrane which is generated by electron transport complexes of the respiratory chain. F-type ATPases consist of two structural domains, F(1) - containing the extramembraneous catalytic core and F(0) - containing the membrane proton channel, linked together by a central stalk and a peripheral stalk. During catalysis, ATP synthesis in the catalytic domain of F(1) is coupled via a rotary mechanism of the central stalk subunits to proton translocation. Part of the complex F(0) domain. A homomeric c-ring of probably 10 subunits is part of the complex rotary element. This Kluyveromyces lactis (strain ATCC 8585 / CBS 2359 / DSM 70799 / NBRC 1267 / NRRL Y-1140 / WM37) (Yeast) protein is ATP synthase subunit 9, mitochondrial (ATP9).